A 431-amino-acid polypeptide reads, in one-letter code: Serine--tRNA ligase (431 aa).

237 to 239 (TAE) provides a ligand contact to L-serine. 268-270 (RSE) serves as a coordination point for ATP. E291 contributes to the L-serine binding site. 355 to 358 (EISS) is a binding site for ATP. S390 serves as a coordination point for L-serine.

It belongs to the class-II aminoacyl-tRNA synthetase family. Type-1 seryl-tRNA synthetase subfamily. As to quaternary structure, homodimer. The tRNA molecule binds across the dimer.

It is found in the cytoplasm. The catalysed reaction is tRNA(Ser) + L-serine + ATP = L-seryl-tRNA(Ser) + AMP + diphosphate + H(+). The enzyme catalyses tRNA(Sec) + L-serine + ATP = L-seryl-tRNA(Sec) + AMP + diphosphate + H(+). It participates in aminoacyl-tRNA biosynthesis; selenocysteinyl-tRNA(Sec) biosynthesis; L-seryl-tRNA(Sec) from L-serine and tRNA(Sec): step 1/1. Catalyzes the attachment of serine to tRNA(Ser). Is also able to aminoacylate tRNA(Sec) with serine, to form the misacylated tRNA L-seryl-tRNA(Sec), which will be further converted into selenocysteinyl-tRNA(Sec). This is Serine--tRNA ligase from Neisseria meningitidis serogroup B (strain ATCC BAA-335 / MC58).